Consider the following 256-residue polypeptide: Thiazole synthase (256 aa).

The Schiff-base intermediate with DXP role is filled by K95. Residues G156, 182 to 183 (AG), and 204 to 205 (NT) contribute to the 1-deoxy-D-xylulose 5-phosphate site.

This sequence belongs to the ThiG family. Homotetramer. Forms heterodimers with either ThiH or ThiS.

It is found in the cytoplasm. The enzyme catalyses [ThiS sulfur-carrier protein]-C-terminal-Gly-aminoethanethioate + 2-iminoacetate + 1-deoxy-D-xylulose 5-phosphate = [ThiS sulfur-carrier protein]-C-terminal Gly-Gly + 2-[(2R,5Z)-2-carboxy-4-methylthiazol-5(2H)-ylidene]ethyl phosphate + 2 H2O + H(+). The protein operates within cofactor biosynthesis; thiamine diphosphate biosynthesis. Its function is as follows. Catalyzes the rearrangement of 1-deoxy-D-xylulose 5-phosphate (DXP) to produce the thiazole phosphate moiety of thiamine. Sulfur is provided by the thiocarboxylate moiety of the carrier protein ThiS. In vitro, sulfur can be provided by H(2)S. The protein is Thiazole synthase of Salmonella agona (strain SL483).